We begin with the raw amino-acid sequence, 1163 residues long: Type IV pilus biogenesis factor PilY1 (1163 aa).

Residues 1–30 (MKSALHQIGKTSLAAALSGAVLLSAQTTHA) form the signal peptide. The interval 329–352 (SVGNADSTSRSLPDGKSYSSQTPY) is disordered. Ca(2+)-binding residues include aspartate 600, aspartate 602, asparagine 604, and aspartate 608. The tract at residues 619–621 (RGD) is integrin-binding motif RGD. Ca(2+)-binding residues include aspartate 851, asparagine 853, aspartate 855, valine 857, and aspartate 859. Residues 1138 to 1163 (SGECLTVNPGPNTRGRQNWRPIEGKN) form a disordered region.

The protein belongs to the PilY1 family. As to quaternary structure, interacts (via C-terminal 532-1163) with host integrins alpha-V/beta-3 (ITGAV/ITGB3) and alpha-V/beta-5 (ITGAV/ITGB5).

Its subcellular location is the fimbrium. It is found in the membrane. The protein resides in the cytoplasm. It localises to the cytosol. Functionally, involved in pilus assembly, twitching motility and adhesion to host cells. Primes type IV pili (T4P) assembly and is required for inclusion of minor pilins PilV, PilW and PilX to the surface pili. Stabilizes assembled pilus fibers likely by antagonizing retraction mediated by PilT. Calcium-binding and calcium release by PilY1 seem to be essential for twitching motility and for regulation of pilus retraction dynamics of PilT. Adhesin for human tissue specifically recognizing a host receptor localized or enriched on basolateral epithelial cell surfaces. Binds host integrins in an calcium-dependent manner in vitro and this interaction may be employed by the bacterium to mediate host epithelial cell binding in vivo. The polypeptide is Type IV pilus biogenesis factor PilY1 (Pseudomonas aeruginosa (strain PAK)).